Reading from the N-terminus, the 29-residue chain is Cytochrome b6-f complex subunit 8 (29 aa).

The helical transmembrane segment at 3 to 23 (IVSLAWAALMVVFTFSLSLVV) threads the bilayer.

This sequence belongs to the PetN family. As to quaternary structure, the 4 large subunits of the cytochrome b6-f complex are cytochrome b6, subunit IV (17 kDa polypeptide, PetD), cytochrome f and the Rieske protein, while the 4 small subunits are PetG, PetL, PetM and PetN. The complex functions as a dimer.

Its subcellular location is the plastid. It localises to the chloroplast thylakoid membrane. In terms of biological role, component of the cytochrome b6-f complex, which mediates electron transfer between photosystem II (PSII) and photosystem I (PSI), cyclic electron flow around PSI, and state transitions. This chain is Cytochrome b6-f complex subunit 8, found in Solanum bulbocastanum (Wild potato).